The chain runs to 145 residues: Globin (145 aa).

The residue at position 2 (Ser2) is an N-acetylserine. Residues 2-145 (SLSAAEADLV…IVAALKAAGK (144 aa)) form the Globin domain. Position 96 (His96) interacts with heme b.

It belongs to the globin family. Monomer.

The polypeptide is Globin (Aplysia kurodai (Kuroda's sea hare)).